Reading from the N-terminus, the 76-residue chain is Beta-defensin 121 (76 aa).

Residues 1–15 (MKLLLLLLTVTLLLA) form the signal peptide. Cystine bridges form between cysteine 23/cysteine 50, cysteine 30/cysteine 44, and cysteine 34/cysteine 51.

Belongs to the beta-defensin family. As to expression, abundant expression in the male reproductive tract only.

The protein resides in the secreted. Its function is as follows. Has antibacterial activity. The polypeptide is Beta-defensin 121 (DEFB121) (Macaca mulatta (Rhesus macaque)).